Reading from the N-terminus, the 343-residue chain is Aldehyde reductase 2 (343 aa).

Y177 is a binding site for NADP(+).

This sequence belongs to the NAD(P)-dependent epimerase/dehydratase family. Dihydroflavonol-4-reductase subfamily. Monomer.

The catalysed reaction is a primary alcohol + NADP(+) = an aldehyde + NADPH + H(+). Inhibited by quercetin and diphenylhydantoin. Functionally, catalyzes the asymmetric reduction of o-substituted aliphatic and aromatic aldehydes and ketones to an S-enantiomer. Reduces ethyl 4-chloro-3-oxobutanoate to ethyl (S)-4-chloro-3-hydroxybutanoate. The polypeptide is Aldehyde reductase 2 (Sporidiobolus salmonicolor (Yeast-like fungus)).